The primary structure comprises 95 residues: MHPTQIILRPVITEKVTILRDSVKKVAFFVHPQSNKIEVKKAIELLFNVKVMAINVVNYTPRVRTRNRRKVHVSGCRKAYVTLAPGEKISFFEGL.

The protein belongs to the universal ribosomal protein uL23 family. As to quaternary structure, part of the 50S ribosomal subunit. Contacts protein L29, and trigger factor when it is bound to the ribosome.

Its function is as follows. One of the early assembly proteins it binds 23S rRNA. One of the proteins that surrounds the polypeptide exit tunnel on the outside of the ribosome. Forms the main docking site for trigger factor binding to the ribosome. The protein is Large ribosomal subunit protein uL23 of Lawsonia intracellularis (strain PHE/MN1-00).